The following is a 209-amino-acid chain: Uracil phosphoribosyltransferase (209 aa).

5-phospho-alpha-D-ribose 1-diphosphate is bound by residues Arg79, Arg104, and 131 to 139 (DPMLATGGS). Uracil contacts are provided by residues Ile194 and 199–201 (GDA). A 5-phospho-alpha-D-ribose 1-diphosphate-binding site is contributed by Asp200.

Belongs to the UPRTase family. The cofactor is Mg(2+).

It carries out the reaction UMP + diphosphate = 5-phospho-alpha-D-ribose 1-diphosphate + uracil. Its pathway is pyrimidine metabolism; UMP biosynthesis via salvage pathway; UMP from uracil: step 1/1. Its activity is regulated as follows. Allosterically activated by GTP. In terms of biological role, catalyzes the conversion of uracil and 5-phospho-alpha-D-ribose 1-diphosphate (PRPP) to UMP and diphosphate. The polypeptide is Uracil phosphoribosyltransferase (Geobacillus sp. (strain WCH70)).